Here is a 328-residue protein sequence, read N- to C-terminus: Aspartate carbamoyltransferase catalytic subunit (328 aa).

Carbamoyl phosphate is bound by residues R70 and T71. K98 is a binding site for L-aspartate. Positions 120, 150, and 153 each coordinate carbamoyl phosphate. L-aspartate contacts are provided by R183 and R238. Carbamoyl phosphate-binding residues include G279 and P280.

It belongs to the aspartate/ornithine carbamoyltransferase superfamily. ATCase family. In terms of assembly, heterododecamer (2C3:3R2) of six catalytic PyrB chains organized as two trimers (C3), and six regulatory PyrI chains organized as three dimers (R2).

The enzyme catalyses carbamoyl phosphate + L-aspartate = N-carbamoyl-L-aspartate + phosphate + H(+). The protein operates within pyrimidine metabolism; UMP biosynthesis via de novo pathway; (S)-dihydroorotate from bicarbonate: step 2/3. Catalyzes the condensation of carbamoyl phosphate and aspartate to form carbamoyl aspartate and inorganic phosphate, the committed step in the de novo pyrimidine nucleotide biosynthesis pathway. The sequence is that of Aspartate carbamoyltransferase catalytic subunit from Methylococcus capsulatus (strain ATCC 33009 / NCIMB 11132 / Bath).